The sequence spans 861 residues: Bifunctional uridylyltransferase/uridylyl-removing enzyme (861 aa).

The interval 1–322 (MHTAAAATPA…FPTELGITRT (322 aa)) is uridylyltransferase. The segment at 323–679 (INGRFVERQG…ARISPVGEGL (357 aa)) is uridylyl-removing. The HD domain occupies 441–557 (VDQHILMVVR…RHFADQVGSE (117 aa)). ACT domains are found at residues 680–763 (QVAV…AEPP) and 792–861 (LLSL…ALAI).

Belongs to the GlnD family. It depends on Mg(2+) as a cofactor.

The enzyme catalyses [protein-PII]-L-tyrosine + UTP = [protein-PII]-uridylyl-L-tyrosine + diphosphate. It catalyses the reaction [protein-PII]-uridylyl-L-tyrosine + H2O = [protein-PII]-L-tyrosine + UMP + H(+). Its activity is regulated as follows. Uridylyltransferase (UTase) activity is inhibited by glutamine, while glutamine activates uridylyl-removing (UR) activity. Modifies, by uridylylation and deuridylylation, the PII regulatory proteins (GlnB and homologs), in response to the nitrogen status of the cell that GlnD senses through the glutamine level. Under low glutamine levels, catalyzes the conversion of the PII proteins and UTP to PII-UMP and PPi, while under higher glutamine levels, GlnD hydrolyzes PII-UMP to PII and UMP (deuridylylation). Thus, controls uridylylation state and activity of the PII proteins, and plays an important role in the regulation of nitrogen assimilation and metabolism. In Ralstonia nicotianae (strain ATCC BAA-1114 / GMI1000) (Ralstonia solanacearum), this protein is Bifunctional uridylyltransferase/uridylyl-removing enzyme.